Consider the following 472-residue polypeptide: MSKIKTRFAPSPTGYLHVGGARTALYSWLYSRHNKGEFVLRIEDTDLERSTQEAINAIMDGMNWLNLNWDEGPYYQTKRFDRYNQAIDQMLEQGNAYRCYCSKEHLEALRETQMANGEKPRYDGRCRDNPCQHDPAQPHVVRFRNPQEGSVIFNDQIRGPIEFSNQELDDLIIRRTDGSPTYNFCVVIDDWDMEITHVIRGEDHINNTPRQINILKALGAPVPEYAHVSMILGDDGKKLSKRHGAVSVMQYRDDGYLPEALLNYLVRLGWSHGDQEIFSIEEMTELFSLDAINKSASAFNTEKLQWLNHHYINTLPPEKVAVHLAWHIEQQGIDSRNGPQLVDLIKLLGERCKTLKEMAESCRYFYEDFAEFDADAAKKHLRPVARQPLEVVHAKLASITDWTPENVHHAIQSTADELEVGMGKVGMPLRVAATGAGQSPGVDVTIHAIGQPRTLSRINQALEFIAQRETQS.

The short motif at 10–20 (PSPTGYLHVGG) is the 'HIGH' region element. Positions 99, 101, 126, and 128 each coordinate Zn(2+). Positions 238–242 (KLSKR) match the 'KMSKS' region motif. Lys241 contacts ATP.

Belongs to the class-I aminoacyl-tRNA synthetase family. Glutamate--tRNA ligase type 1 subfamily. Monomer. The cofactor is Zn(2+).

It is found in the cytoplasm. It carries out the reaction tRNA(Glu) + L-glutamate + ATP = L-glutamyl-tRNA(Glu) + AMP + diphosphate. Its function is as follows. Catalyzes the attachment of glutamate to tRNA(Glu) in a two-step reaction: glutamate is first activated by ATP to form Glu-AMP and then transferred to the acceptor end of tRNA(Glu). The polypeptide is Glutamate--tRNA ligase (Photorhabdus laumondii subsp. laumondii (strain DSM 15139 / CIP 105565 / TT01) (Photorhabdus luminescens subsp. laumondii)).